Here is a 250-residue protein sequence, read N- to C-terminus: uncharacterized protein (250 aa).

Belongs to the carbohydrate kinase PfkB family.

This is an uncharacterized protein from Archaeoglobus fulgidus (strain ATCC 49558 / DSM 4304 / JCM 9628 / NBRC 100126 / VC-16).